The primary structure comprises 141 residues: Large ribosomal subunit protein uL11 (141 aa).

The protein belongs to the universal ribosomal protein uL11 family. In terms of assembly, part of the ribosomal stalk of the 50S ribosomal subunit. Interacts with L10 and the large rRNA to form the base of the stalk. L10 forms an elongated spine to which L12 dimers bind in a sequential fashion forming a multimeric L10(L12)X complex. In terms of processing, one or more lysine residues are methylated.

Forms part of the ribosomal stalk which helps the ribosome interact with GTP-bound translation factors. The protein is Large ribosomal subunit protein uL11 of Streptococcus thermophilus (strain CNRZ 1066).